The following is a 152-amino-acid chain: Gamma-glutamylaminecyclotransferase C (152 aa).

A substrate-binding site is contributed by 9 to 12 (YGSL). Glu84 (proton acceptor) is an active-site residue.

Belongs to the gamma-glutamylcyclotransferase family.

The enzyme catalyses epsilon-(gamma-L-glutamyl)-L-lysine = 5-oxo-L-proline + L-lysine. Its function is as follows. May contribute to degradation of proteins cross-linked by transglutaminases by degrading the cross-link between a lysine and a glutamic acid residue. Catalyzes the formation of 5-oxo-L-proline from L-gamma-glutamyl-L-epsilon-lysine. The protein is Gamma-glutamylaminecyclotransferase C (ggact.3) of Danio rerio (Zebrafish).